We begin with the raw amino-acid sequence, 339 residues long: N-acetylmuramate/N-acetylglucosamine kinase (339 aa).

This sequence belongs to the kinase AmgK family.

It catalyses the reaction N-acetyl-D-muramate + ATP = N-acetyl-alpha-D-muramate 1-phosphate + ADP + H(+). It carries out the reaction N-acetyl-D-glucosamine + ATP = N-acetyl-alpha-D-glucosamine 1-phosphate + ADP + H(+). It functions in the pathway cell wall biogenesis; peptidoglycan recycling. Its function is as follows. Sugar kinase that catalyzes the ATP-dependent phosphorylation of N-acetylmuramate (MurNAc) and N-acetylglucosamine (GlcNAc) at its C1 hydroxyl group, leading to MurNAc alpha-1P and GlcNAc alpha-1P, respectively. Is involved in peptidoglycan recycling as part of a cell wall recycling pathway that bypasses de novo biosynthesis of the peptidoglycan precursor UDP-MurNAc. Plays a role in intrinsic resistance to fosfomycin, which targets the de novo synthesis of UDP-MurNAc. Is also able to use N-acetylgalactosamine (GalNAc) as a substrate, but not N-acetylmannosamine, N-deacetylated sugars or glucose. This is N-acetylmuramate/N-acetylglucosamine kinase from Pseudomonas putida (strain ATCC 47054 / DSM 6125 / CFBP 8728 / NCIMB 11950 / KT2440).